We begin with the raw amino-acid sequence, 221 residues long: High frequency lysogenization protein HflD homolog (221 aa).

Belongs to the HflD family.

Its subcellular location is the cytoplasm. The protein localises to the cell inner membrane. The polypeptide is High frequency lysogenization protein HflD homolog (Acidithiobacillus ferrooxidans (strain ATCC 23270 / DSM 14882 / CIP 104768 / NCIMB 8455) (Ferrobacillus ferrooxidans (strain ATCC 23270))).